Here is a 207-residue protein sequence, read N- to C-terminus: Interleukin-6 (207 aa).

The N-terminal stretch at 1 to 18 (MKFFSIASLGLLLVVATA) is a signal peptide. The disordered stretch occupies residues 26–47 (REDGENSVTRNKPTRASSGKTR). The span at 31–44 (NSVTRNKPTRASSG) shows a compositional bias: polar residues. A disulfide bridge connects residues Cys65 and Cys71. Phosphoserine is present on Ser74. A disulfide bridge connects residues Cys94 and Cys104.

Belongs to the IL-6 superfamily. Component of a hexamer of two molecules each of IL6, IL6R and IL6ST; first binds to IL6R to associate with the signaling subunit IL6ST. Interacts with IL6R (via the N-terminal ectodomain); this interaction may be affected by IL6R-binding with SORL1, hence decreasing IL6 cis signaling. Interacts with SORL1 (via the N-terminal ectodomain); this interaction leads to IL6 internalization and lysosomal degradation. May form a trimeric complex with the soluble SORL1 ectodomain and soluble IL6R receptor; this interaction might stabilize circulating IL6, hence promoting IL6 trans signaling.

The protein resides in the secreted. Cytokine with a wide variety of biological functions in immunity, tissue regeneration, and metabolism. Binds to IL6R, then the complex associates to the signaling subunit IL6ST/gp130 to trigger the intracellular IL6-signaling pathway. The interaction with the membrane-bound IL6R and IL6ST stimulates 'classic signaling', whereas the binding of IL6 and soluble IL6R to IL6ST stimulates 'trans-signaling'. Alternatively, 'cluster signaling' occurs when membrane-bound IL6:IL6R complexes on transmitter cells activate IL6ST receptors on neighboring receiver cells. In terms of biological role, IL6 is a potent inducer of the acute phase response. Rapid production of IL6 contributes to host defense during infection and tissue injury, but excessive IL6 synthesis is involved in disease pathology. In the innate immune response, is synthesized by myeloid cells, such as macrophages and dendritic cells, upon recognition of pathogens through toll-like receptors (TLRs) at the site of infection or tissue injury. In the adaptive immune response, is required for the differentiation of B cells into immunoglobulin-secreting cells. Plays a major role in the differentiation of CD4(+) T cell subsets. Essential factor for the development of T follicular helper (Tfh) cells that are required for the induction of germinal-center formation. Required to drive naive CD4(+) T cells to the Th17 lineage. Also required for proliferation of myeloma cells and the survival of plasmablast cells. Its function is as follows. Acts as an essential factor in bone homeostasis and on vessels directly or indirectly by induction of VEGF, resulting in increased angiogenesis activity and vascular permeability. Induces, through 'trans-signaling' and synergistically with IL1B and TNF, the production of VEGF. Involved in metabolic controls, is discharged into the bloodstream after muscle contraction increasing lipolysis and improving insulin resistance. 'Trans-signaling' in central nervous system also regulates energy and glucose homeostasis. Mediates, through GLP-1, crosstalk between insulin-sensitive tissues, intestinal L cells and pancreatic islets to adapt to changes in insulin demand. Also acts as a myokine. Plays a protective role during liver injury, being required for maintenance of tissue regeneration. Also has a pivotal role in iron metabolism by regulating HAMP/hepcidin expression upon inflammation or bacterial infection. Through activation of IL6ST-YAP-NOTCH pathway, induces inflammation-induced epithelial regeneration. The polypeptide is Interleukin-6 (IL6) (Marmota monax (Woodchuck)).